Here is a 171-residue protein sequence, read N- to C-terminus: 3-hydroxydecanoyl-[acyl-carrier-protein] dehydratase (171 aa).

His-70 is a catalytic residue.

This sequence belongs to the thioester dehydratase family. FabA subfamily. Homodimer.

It localises to the cytoplasm. It carries out the reaction a (3R)-hydroxyacyl-[ACP] = a (2E)-enoyl-[ACP] + H2O. It catalyses the reaction (3R)-hydroxydecanoyl-[ACP] = (2E)-decenoyl-[ACP] + H2O. The catalysed reaction is (2E)-decenoyl-[ACP] = (3Z)-decenoyl-[ACP]. Its pathway is lipid metabolism; fatty acid biosynthesis. Necessary for the introduction of cis unsaturation into fatty acids. Catalyzes the dehydration of (3R)-3-hydroxydecanoyl-ACP to E-(2)-decenoyl-ACP and then its isomerization to Z-(3)-decenoyl-ACP. Can catalyze the dehydratase reaction for beta-hydroxyacyl-ACPs with saturated chain lengths up to 16:0, being most active on intermediate chain length. The chain is 3-hydroxydecanoyl-[acyl-carrier-protein] dehydratase from Vibrio campbellii (strain ATCC BAA-1116).